The primary structure comprises 227 residues: MTAIAPVITIDGPSGAGKGTLCKAMAEALQWHLLDSGAIYRVLALAALHHHVDVASEDALVPLASHLDVRFVSTNGNLEVILEGEDVSGEIRTQEVANAASQVATFPRVREALLRRQRAFRELPGLIADGRDMGTVVFPDAPVKIFLDASSEERAHRRMLQLQEKGFSVNFERLLAEIKERDDRDRNRAVAPLVPAADALVLDSTTLSIEQVIEKALQYARQKLALA.

12 to 20 is an ATP binding site; that stretch reads GPSGAGKGT.

The protein belongs to the cytidylate kinase family. Type 1 subfamily.

It is found in the cytoplasm. The enzyme catalyses CMP + ATP = CDP + ADP. It carries out the reaction dCMP + ATP = dCDP + ADP. This chain is Cytidylate kinase, found in Shigella boydii serotype 4 (strain Sb227).